We begin with the raw amino-acid sequence, 311 residues long: tRNA-cytidine(32) 2-sulfurtransferase (311 aa).

The PP-loop motif motif lies at 47–52 (SGGKDS). Positions 122, 125, and 213 each coordinate [4Fe-4S] cluster.

Belongs to the TtcA family. As to quaternary structure, homodimer. The cofactor is Mg(2+). [4Fe-4S] cluster is required as a cofactor.

The protein resides in the cytoplasm. It carries out the reaction cytidine(32) in tRNA + S-sulfanyl-L-cysteinyl-[cysteine desulfurase] + AH2 + ATP = 2-thiocytidine(32) in tRNA + L-cysteinyl-[cysteine desulfurase] + A + AMP + diphosphate + H(+). Its pathway is tRNA modification. Functionally, catalyzes the ATP-dependent 2-thiolation of cytidine in position 32 of tRNA, to form 2-thiocytidine (s(2)C32). The sulfur atoms are provided by the cysteine/cysteine desulfurase (IscS) system. The protein is tRNA-cytidine(32) 2-sulfurtransferase of Escherichia coli O1:K1 / APEC.